The following is a 339-amino-acid chain: Geranylgeranyl transferase type-2 subunit beta (339 aa).

T11 bears the Phosphothreonine mark. 6 PFTB repeats span residues 28–69, 76–117, 124–165, 172–213, 220–261, and 268–310; these read LEKH…DLMG, REEI…TLYD, VDKV…ALLG, VEKA…AITS, SDLL…KIIG, and REKL…SLLG. Residues 198–200 and 240–243 each bind geranylgeranyl diphosphate; these read HAG and RPEK. D246 and C248 together coordinate Zn(2+). Geranylgeranyl diphosphate-binding positions include Y249 and 249-252; that span reads YSWW. H298 provides a ligand contact to Zn(2+).

It belongs to the protein prenyltransferase subunit beta family. As to quaternary structure, heterotrimer composed of RABGGTA, RABGGTB and CHM; within this trimer, RABGGTA and RABGGTB form the catalytic component B, while CHM (component A) mediates peptide substrate binding. The Rab GGTase dimer (RGGT) interacts with CHM (component A) prior to Rab protein binding; the association is stabilized by geranylgeranyl pyrophosphate (GGpp). The CHM:RGGT:Rab complex is destabilized by GGpp. Interaction of RABGGTB with prenylated PTP4A2 precludes its association with RABGGTA and inhibits enzyme activity. Interacts with CHODL. Interacts with non-phosphorylated form of RAB8A; phosphorylation of RAB8A at 'Thr-72' disrupts this interaction. Zn(2+) is required as a cofactor. As to expression, ubiquitous. Detected in all the major organs in adult animals.

It carries out the reaction geranylgeranyl diphosphate + L-cysteinyl-[protein] = S-geranylgeranyl-L-cysteinyl-[protein] + diphosphate. Its activity is regulated as follows. The enzymatic reaction requires the aid of a Rab escort protein (also called component A), such as CHM. Its function is as follows. Catalyzes the transfer of a geranylgeranyl moiety from geranylgeranyl diphosphate to both cysteines of Rab proteins with the C-terminal sequence -XXCC, -XCXC and -CCXX, such as RAB1A, RAB3A, RAB5A and RAB7A. The chain is Geranylgeranyl transferase type-2 subunit beta (Rabggtb) from Mus musculus (Mouse).